The sequence spans 107 residues: uncharacterized protein (107 aa).

Residues 1-18 (MRTLMLIILSILIYLSSA) form the signal peptide.

This is an uncharacterized protein from Caenorhabditis elegans.